Reading from the N-terminus, the 224-residue chain is Thiamine-phosphate synthase (224 aa).

4-amino-2-methyl-5-(diphosphooxymethyl)pyrimidine contacts are provided by residues 43–47 (QYRPK) and Asn75. 2 residues coordinate Mg(2+): Asp76 and Asp95. Ser114 contacts 4-amino-2-methyl-5-(diphosphooxymethyl)pyrimidine. A 2-[(2R,5Z)-2-carboxy-4-methylthiazol-5(2H)-ylidene]ethyl phosphate-binding site is contributed by 141–143 (SAT). 4-amino-2-methyl-5-(diphosphooxymethyl)pyrimidine is bound at residue Lys144. Gly171 serves as a coordination point for 2-[(2R,5Z)-2-carboxy-4-methylthiazol-5(2H)-ylidene]ethyl phosphate.

Belongs to the thiamine-phosphate synthase family. Requires Mg(2+) as cofactor.

The catalysed reaction is 2-[(2R,5Z)-2-carboxy-4-methylthiazol-5(2H)-ylidene]ethyl phosphate + 4-amino-2-methyl-5-(diphosphooxymethyl)pyrimidine + 2 H(+) = thiamine phosphate + CO2 + diphosphate. It carries out the reaction 2-(2-carboxy-4-methylthiazol-5-yl)ethyl phosphate + 4-amino-2-methyl-5-(diphosphooxymethyl)pyrimidine + 2 H(+) = thiamine phosphate + CO2 + diphosphate. The enzyme catalyses 4-methyl-5-(2-phosphooxyethyl)-thiazole + 4-amino-2-methyl-5-(diphosphooxymethyl)pyrimidine + H(+) = thiamine phosphate + diphosphate. The protein operates within cofactor biosynthesis; thiamine diphosphate biosynthesis; thiamine phosphate from 4-amino-2-methyl-5-diphosphomethylpyrimidine and 4-methyl-5-(2-phosphoethyl)-thiazole: step 1/1. Functionally, condenses 4-methyl-5-(beta-hydroxyethyl)thiazole monophosphate (THZ-P) and 2-methyl-4-amino-5-hydroxymethyl pyrimidine pyrophosphate (HMP-PP) to form thiamine monophosphate (TMP). The protein is Thiamine-phosphate synthase of Methylococcus capsulatus (strain ATCC 33009 / NCIMB 11132 / Bath).